Here is a 399-residue protein sequence, read N- to C-terminus: Elongation factor Tu (399 aa).

One can recognise a tr-type G domain in the interval 10–209 (KPHVNIGTIG…AVDSYIPTPV (200 aa)). The G1 stretch occupies residues 19 to 26 (GHVDHGKT). 19-26 (GHVDHGKT) serves as a coordination point for GTP. Thr26 serves as a coordination point for Mg(2+). Residues 60–64 (GITIA) are G2. The G3 stretch occupies residues 81–84 (DCPG). GTP-binding positions include 81–85 (DCPGH) and 136–139 (NKAD). Residues 136–139 (NKAD) form a G4 region. The tract at residues 174–176 (SAL) is G5.

The protein belongs to the TRAFAC class translation factor GTPase superfamily. Classic translation factor GTPase family. EF-Tu/EF-1A subfamily. As to quaternary structure, monomer.

The protein localises to the cytoplasm. The catalysed reaction is GTP + H2O = GDP + phosphate + H(+). Functionally, GTP hydrolase that promotes the GTP-dependent binding of aminoacyl-tRNA to the A-site of ribosomes during protein biosynthesis. The sequence is that of Elongation factor Tu from Campylobacter concisus (strain 13826).